A 380-amino-acid polypeptide reads, in one-letter code: MADARKAALDTALKKIEKNFGKGAIMRMGDAAQTTISTISSGSLALDDALGVGGYPRGRIVEIYGPESSGKTTVALHAVAEVQKQGGTAAYIDAENALDPVYAEHLGVNIDDLLLSQPDTGEQGLEIADALVSSGAVDILVVDSVAALVPRAEIEGEMGDAHVGLQARLMSQALRKLSGTLNKTKTIALFINQIREKVGVMFGNPETTPGGRALKFYATIRLEVRRAEQIKEGTNIIGNRVRIKVVKNKVAPPFKRAEVDIMYGQGISQTGEIVDMAAEKDIVKKSGSWYSYGDDRIGQGRENAKKYLDEHPDVMTEIRQKVRDAYGMDATGEETSETDDQAKEAKDKGTAKNGSKGQSKSTKATPAETALDLGDQPTEK.

An ATP-binding site is contributed by 65–72 (GPESSGKT). The tract at residues 329–380 (DATGEETSETDDQAKEAKDKGTAKNGSKGQSKSTKATPAETALDLGDQPTEK) is disordered. Over residues 340-350 (DQAKEAKDKGT) the composition is skewed to basic and acidic residues. Over residues 352–364 (KNGSKGQSKSTKA) the composition is skewed to polar residues.

Belongs to the RecA family.

It localises to the cytoplasm. Functionally, can catalyze the hydrolysis of ATP in the presence of single-stranded DNA, the ATP-dependent uptake of single-stranded DNA by duplex DNA, and the ATP-dependent hybridization of homologous single-stranded DNAs. It interacts with LexA causing its activation and leading to its autocatalytic cleavage. The sequence is that of Protein RecA from Lactiplantibacillus plantarum (strain ATCC BAA-793 / NCIMB 8826 / WCFS1) (Lactobacillus plantarum).